The chain runs to 193 residues: Acyl carrier protein phosphodiesterase (193 aa).

Belongs to the AcpH family.

The enzyme catalyses holo-[ACP] + H2O = apo-[ACP] + (R)-4'-phosphopantetheine + H(+). Its function is as follows. Converts holo-ACP to apo-ACP by hydrolytic cleavage of the phosphopantetheine prosthetic group from ACP. The sequence is that of Acyl carrier protein phosphodiesterase from Yersinia enterocolitica serotype O:8 / biotype 1B (strain NCTC 13174 / 8081).